A 607-amino-acid polypeptide reads, in one-letter code: UvrABC system protein C (607 aa).

Positions 16-94 constitute a GIY-YIG domain; the sequence is GRPGVYRMFD…IKEWRPPYNI (79 aa). The UVR domain occupies 203-238; the sequence is NALSDELNASMEKAAMALDFERAAELRDQVALLRRV.

It belongs to the UvrC family. In terms of assembly, interacts with UvrB in an incision complex.

It localises to the cytoplasm. The UvrABC repair system catalyzes the recognition and processing of DNA lesions. UvrC both incises the 5' and 3' sides of the lesion. The N-terminal half is responsible for the 3' incision and the C-terminal half is responsible for the 5' incision. The chain is UvrABC system protein C from Pseudomonas syringae pv. syringae (strain B728a).